Reading from the N-terminus, the 145-residue chain is Large ribosomal subunit protein uL13 (145 aa).

The protein belongs to the universal ribosomal protein uL13 family. In terms of assembly, part of the 50S ribosomal subunit.

Functionally, this protein is one of the early assembly proteins of the 50S ribosomal subunit, although it is not seen to bind rRNA by itself. It is important during the early stages of 50S assembly. This is Large ribosomal subunit protein uL13 from Geobacillus kaustophilus (strain HTA426).